A 71-amino-acid chain; its full sequence is Protein CYSTEINE-RICH TRANSMEMBRANE MODULE 3 (71 aa).

Positions Val-30 to Gly-49 are disordered. The helical transmembrane segment at Lys-48 to Cys-64 threads the bilayer.

The protein belongs to the CYSTM1 family. Heterodimers. Interacts with CYSTM7 and WIH1/CYSTM13. As to expression, mostly expressed in leaves and flowers and, to a lower extent, in stems, siliques, shoots and roots.

It is found in the cell membrane. Its subcellular location is the cytoplasm. The protein localises to the mitochondrion. In terms of biological role, negatively regulates salt stress responses and Na(+) homeostasis. Prevents Na(+) efflux, disturbs reactive oxygen species (ROS) homeostasis, and represses the expression of nuclear salt stress-responsive genes. Involved in resistance to abiotic stress. This chain is Protein CYSTEINE-RICH TRANSMEMBRANE MODULE 3, found in Arabidopsis thaliana (Mouse-ear cress).